Reading from the N-terminus, the 126-residue chain is Large ribosomal subunit protein bL17 (126 aa).

It belongs to the bacterial ribosomal protein bL17 family. Part of the 50S ribosomal subunit. Contacts protein L32.

This is Large ribosomal subunit protein bL17 from Laribacter hongkongensis (strain HLHK9).